We begin with the raw amino-acid sequence, 341 residues long: L-threonine 3-dehydrogenase (341 aa).

Residue cysteine 38 participates in Zn(2+) binding. Residues threonine 40 and histidine 43 each act as charge relay system in the active site. Residues histidine 63, glutamate 64, cysteine 93, cysteine 96, cysteine 99, and cysteine 107 each coordinate Zn(2+). NAD(+) is bound by residues isoleucine 175, aspartate 195, arginine 200, 262-264 (LGI), and 286-287 (IY).

It belongs to the zinc-containing alcohol dehydrogenase family. In terms of assembly, homotetramer. Zn(2+) serves as cofactor.

It localises to the cytoplasm. The enzyme catalyses L-threonine + NAD(+) = (2S)-2-amino-3-oxobutanoate + NADH + H(+). The protein operates within amino-acid degradation; L-threonine degradation via oxydo-reductase pathway; glycine from L-threonine: step 1/2. Its function is as follows. Catalyzes the NAD(+)-dependent oxidation of L-threonine to 2-amino-3-ketobutyrate. This Salmonella choleraesuis (strain SC-B67) protein is L-threonine 3-dehydrogenase.